Here is a 191-residue protein sequence, read N- to C-terminus: NF-kappa-B inhibitor-interacting Ras-like protein 2 (191 aa).

Residues 1–191 (MGKSCKVVVC…KNKGSGSVDG (191 aa)) are small GTPase-like. 11 to 18 (GQAAVGKT) serves as a coordination point for GTP. The Effector region signature appears at 35-43 (MIETQEDIY). GTP contacts are provided by residues 61–65 (DTRGL) and 120–123 (NKCD). A disordered region spans residues 170–191 (QPQSKSAFPLSRKNKGSGSVDG).

Belongs to the small GTPase superfamily. Ras family. KappaB-Ras subfamily.

It localises to the cytoplasm. Functionally, atypical Ras-like protein that acts as a potent regulator of NF-kappa-B activity by preventing the degradation of NF-kappa-B inhibitor beta (NFKBIB) by most signals, explaining why NFKBIB is more resistant to degradation. The sequence is that of NF-kappa-B inhibitor-interacting Ras-like protein 2 (NKIRAS2) from Gallus gallus (Chicken).